The sequence spans 201 residues: Recombination protein RecR (201 aa).

The C4-type zinc-finger motif lies at 57-72 (CSDCRTFTEQDVCAIC). The Toprim domain occupies 81–176 (GLVCVVESPA…MASRIAHGVP (96 aa)).

It belongs to the RecR family.

In terms of biological role, may play a role in DNA repair. It seems to be involved in an RecBC-independent recombinational process of DNA repair. It may act with RecF and RecO. The sequence is that of Recombination protein RecR from Pectobacterium atrosepticum (strain SCRI 1043 / ATCC BAA-672) (Erwinia carotovora subsp. atroseptica).